Here is a 57-residue protein sequence, read N- to C-terminus: Large ribosomal subunit protein bL32A (57 aa).

The interval 1–22 (MAVPARRTSKTKKRLRRTHEKL) is disordered. Positions 7–20 (RTSKTKKRLRRTHE) are enriched in basic residues.

Belongs to the bacterial ribosomal protein bL32 family.

The protein is Large ribosomal subunit protein bL32A (rpmF1) of Enterococcus faecalis (strain ATCC 700802 / V583).